The chain runs to 89 residues: Small ribosomal subunit protein bS20 (89 aa).

A compositionally biased stretch (basic residues) spans 1–12; sequence MANIKSAKKRVK. The interval 1–20 is disordered; the sequence is MANIKSAKKRVKQTVVRNER.

This sequence belongs to the bacterial ribosomal protein bS20 family.

In terms of biological role, binds directly to 16S ribosomal RNA. The polypeptide is Small ribosomal subunit protein bS20 (Xylella fastidiosa (strain 9a5c)).